The following is a 553-amino-acid chain: Probable inactive serine/threonine-protein kinase samkD (553 aa).

The 67-residue stretch at 24 to 90 folds into the SAM domain; sequence WDNETVCKWL…FEYQILKNCY (67 aa). Positions 134–393 constitute a Protein kinase domain; sequence YQYIETISKN…SKELLKSFWF (260 aa). ATP is bound by residues 140 to 148 and Lys165; that span reads ISKNKFCEI.

The protein belongs to the protein kinase superfamily. Ser/Thr protein kinase family.

This chain is Probable inactive serine/threonine-protein kinase samkD (samkD), found in Dictyostelium discoideum (Social amoeba).